The following is a 78-amino-acid chain: Beta-defensin 105A (78 aa).

Residues 1 to 27 form the signal peptide; that stretch reads MALIRKTFYFLFAVFFVLVQLPSECQA. Cystine bridges form between C43–C74, C53–C67, and C57–C73.

It belongs to the beta-defensin family.

It is found in the secreted. Has antimicrobial activity. The protein is Beta-defensin 105A (DEFB105A) of Pongo pygmaeus (Bornean orangutan).